An 838-amino-acid chain; its full sequence is uncharacterized protein (838 aa).

This is an uncharacterized protein from Rickettsia conorii (strain ATCC VR-613 / Malish 7).